Consider the following 199-residue polypeptide: VAMP-like protein YKT62 (199 aa).

Residues 7 to 131 (LVLKCDPETR…PYLKEASDKF (125 aa)) enclose the Longin domain. A v-SNARE coiled-coil homology domain is found at 139–199 (KLLKIQRELD…KKTNSCCTLL (61 aa)). A lipid anchor (S-palmitoyl cysteine) is attached at C195. Residue C196 is modified to Cysteine methyl ester. C196 carries S-geranylgeranyl cysteine lipidation. The propeptide at 197-199 (TLL) is removed in mature form.

It belongs to the synaptobrevin family. Interacts with SYP41. Core constituent of the SNARE complex required for membrane fusion at the trans-Golgi network.

The protein resides in the cell membrane. Functionally, involved in the secretory pathway. Essential for membrane fusion mediated by either SYP41 or SYP61; triggers the fusion of phospholipid vesicles containing SYP41 or SYP61 and VTI12. The polypeptide is VAMP-like protein YKT62 (Arabidopsis thaliana (Mouse-ear cress)).